The chain runs to 407 residues: Tryptophan synthase beta chain (407 aa).

K98 carries the N6-(pyridoxal phosphate)lysine modification.

The protein belongs to the TrpB family. Tetramer of two alpha and two beta chains. Pyridoxal 5'-phosphate serves as cofactor.

It catalyses the reaction (1S,2R)-1-C-(indol-3-yl)glycerol 3-phosphate + L-serine = D-glyceraldehyde 3-phosphate + L-tryptophan + H2O. The protein operates within amino-acid biosynthesis; L-tryptophan biosynthesis; L-tryptophan from chorismate: step 5/5. The beta subunit is responsible for the synthesis of L-tryptophan from indole and L-serine. The polypeptide is Tryptophan synthase beta chain (Bradyrhizobium sp. (strain BTAi1 / ATCC BAA-1182)).